A 311-amino-acid polypeptide reads, in one-letter code: tRNA dimethylallyltransferase (311 aa).

An ATP-binding site is contributed by 16 to 23 (GATASGKS). A substrate-binding site is contributed by 18 to 23 (TASGKS). Interaction with substrate tRNA regions lie at residues 41–44 (DSRQ) and 165–169 (QRLIR).

It belongs to the IPP transferase family. In terms of assembly, monomer. Mg(2+) serves as cofactor.

The enzyme catalyses adenosine(37) in tRNA + dimethylallyl diphosphate = N(6)-dimethylallyladenosine(37) in tRNA + diphosphate. Catalyzes the transfer of a dimethylallyl group onto the adenine at position 37 in tRNAs that read codons beginning with uridine, leading to the formation of N6-(dimethylallyl)adenosine (i(6)A). This chain is tRNA dimethylallyltransferase, found in Chlorobium chlorochromatii (strain CaD3).